Reading from the N-terminus, the 527-residue chain is Probable bifunctional methylthioribulose-1-phosphate dehydratase/enolase-phosphatase E1 (527 aa).

The segment at 1–244 is methylthioribulose-1-phosphate dehydratase; the sequence is MAAAAAPAVA…AIKLHQLGLD (244 aa). C116 provides a ligand contact to substrate. Residues H134 and H136 each contribute to the Zn(2+) site. The Proton donor/acceptor; for methylthioribulose-1-phosphate dehydratase activity role is filled by E159. H209 contacts Zn(2+). Positions 288–527 are enolase-phosphatase E1; the sequence is IVLDIEGTTT…FKTINSLSEI (240 aa). Positions 291 and 293 each coordinate Mg(2+). Substrate-binding positions include 426 to 427 and K460; that span reads SS. Position 486 (D486) interacts with Mg(2+).

In the N-terminal section; belongs to the aldolase class II family. MtnB subfamily. This sequence in the C-terminal section; belongs to the HAD-like hydrolase superfamily. MasA/MtnC family. The cofactor is Zn(2+). Mg(2+) serves as cofactor.

The enzyme catalyses 5-(methylsulfanyl)-D-ribulose 1-phosphate = 5-methylsulfanyl-2,3-dioxopentyl phosphate + H2O. It catalyses the reaction 5-methylsulfanyl-2,3-dioxopentyl phosphate + H2O = 1,2-dihydroxy-5-(methylsulfanyl)pent-1-en-3-one + phosphate. It participates in amino-acid biosynthesis; L-methionine biosynthesis via salvage pathway; L-methionine from S-methyl-5-thio-alpha-D-ribose 1-phosphate: step 2/6. It functions in the pathway amino-acid biosynthesis; L-methionine biosynthesis via salvage pathway; L-methionine from S-methyl-5-thio-alpha-D-ribose 1-phosphate: step 3/6. The protein operates within amino-acid biosynthesis; L-methionine biosynthesis via salvage pathway; L-methionine from S-methyl-5-thio-alpha-D-ribose 1-phosphate: step 4/6. The polypeptide is Probable bifunctional methylthioribulose-1-phosphate dehydratase/enolase-phosphatase E1 (Ricinus communis (Castor bean)).